The primary structure comprises 203 residues: Holliday junction branch migration complex subunit RuvA (203 aa).

Residues 1–63 (MIGKLSGKVD…EEHMHLYGFL (63 aa)) form a domain I region. Positions 64 to 142 (TLEEKIFFNL…KISSGSAIIK (79 aa)) are domain II. The interval 143–149 (ESLNIKN) is flexible linker. Residues 150–203 (ITPVASNEVIKALVNLGFSRFEAQNAVQGIITQNPEISIDELIKTALKNRNSNF) form a domain III region.

It belongs to the RuvA family. As to quaternary structure, homotetramer. Forms an RuvA(8)-RuvB(12)-Holliday junction (HJ) complex. HJ DNA is sandwiched between 2 RuvA tetramers; dsDNA enters through RuvA and exits via RuvB. An RuvB hexamer assembles on each DNA strand where it exits the tetramer. Each RuvB hexamer is contacted by two RuvA subunits (via domain III) on 2 adjacent RuvB subunits; this complex drives branch migration. In the full resolvosome a probable DNA-RuvA(4)-RuvB(12)-RuvC(2) complex forms which resolves the HJ.

It localises to the cytoplasm. Its function is as follows. The RuvA-RuvB-RuvC complex processes Holliday junction (HJ) DNA during genetic recombination and DNA repair, while the RuvA-RuvB complex plays an important role in the rescue of blocked DNA replication forks via replication fork reversal (RFR). RuvA specifically binds to HJ cruciform DNA, conferring on it an open structure. The RuvB hexamer acts as an ATP-dependent pump, pulling dsDNA into and through the RuvAB complex. HJ branch migration allows RuvC to scan DNA until it finds its consensus sequence, where it cleaves and resolves the cruciform DNA. The sequence is that of Holliday junction branch migration complex subunit RuvA from Rickettsia peacockii (strain Rustic).